A 196-amino-acid chain; its full sequence is CMRF35-like molecule 2 (196 aa).

The N-terminal stretch at 1–17 (MRLCAGLLLLCFQGCLS) is a signal peptide. Residues 18–122 (LTGPGSVSGY…DSWSRDPSVS (105 aa)) enclose the Ig-like V-type domain. Residues 18–171 (LTGPGSVSGY…QLWSLLSSIQ (154 aa)) are Extracellular-facing. An intrachain disulfide couples C36 to C104. An N-linked (GlcNAc...) asparagine glycan is attached at N84. A helical membrane pass occupies residues 172–192 (FQVLVFLKLPLFLSMLCAIFW). Residues 193–196 (VNRL) are Cytoplasmic-facing.

It belongs to the CD300 family. In terms of assembly, interacts with TYROBP.

The protein localises to the cell membrane. In terms of biological role, probably acts as an activating receptor. This Mus musculus (Mouse) protein is CMRF35-like molecule 2 (Cd300e).